A 228-amino-acid chain; its full sequence is MNSQAPVITIDGPSGSGKGTVAGLLARELGWRLLDSGALYRLLAFNASNHGVDLTNEELLKALAAHLDVQFIAAEPGKLQQIILEGEDVSNVIRTETVGAGASMVASLPAVREALLQRQRAFRETPGLIADGRDMGTVVFPDAPLKVFLTASAEERARRRYLQLKGKGEDVSLSSLLDEIRARDERDTQRAVAPLKPAADAIQLDSTELSIEQVLHRIRSELAQRDLV.

Residue G12–T20 participates in ATP binding.

Belongs to the cytidylate kinase family. Type 1 subfamily.

It is found in the cytoplasm. The enzyme catalyses CMP + ATP = CDP + ADP. The catalysed reaction is dCMP + ATP = dCDP + ADP. This chain is Cytidylate kinase, found in Pseudomonas putida (strain W619).